A 525-amino-acid polypeptide reads, in one-letter code: Histidine-rich glycoprotein (525 aa).

A signal peptide spans 1–18 (MKVLTTALLLVTLQCSHA). Positions 19 to 122 (LSPTNCDASE…ESQDLSVNGY (104 aa)) constitute a Cystatin 1 domain. 5 disulfides stabilise this stretch: Cys24–Cys504, Cys78–Cys89, Cys103–Cys124, Cys201–Cys414, and Cys216–Cys239. Positions 41–84 (GRRSGYVFELLRVSDAHLDRAGTATVYYLALDVIESDCWVLSTK) are interaction with ATP5F1A. Asn112, Asn123, and Asn200 each carry an N-linked (GlcNAc...) asparagine glycan. Positions 135–240 (NTKDSPVLLD…TPDSIDINCE (106 aa)) constitute a Cystatin 2 domain. The segment at 273 to 447 (GSRDHHHTHK…SRKRGPGKGL (175 aa)) is disordered. The span at 293 to 303 (EGKDNSDRPRL) shows a compositional bias: basic and acidic residues. Asn322 and Asn330 each carry an N-linked (GlcNAc...) asparagine glycan. A compositionally biased stretch (basic residues) spans 339–404 (HGHRPHGHHP…GHHPHGHHPH (66 aa)). The interval 345-379 (GHHPHSHHPPGHHSHGHHPHGHHPHSHHSHGHHPP) is necessary for endothelial cell focal adhesions and anti-angiogenic activities. Ser438 carries the phosphoserine modification.

Interacts with THBS1 (via the TSP type I repeats); the interaction blocks the antiangiogenic effect of THBS1 with CD36. Interacts with HPSE; the interaction is enhanced at acidic pH, partially inhibits binding of HPSE to cell surface receptors and modulates its enzymatic activity. Interacts (via the HRR domain) with TMP1; the interaction partially mediates the antiangiogenic properties of HRG. Interacts with kappa and lambda light chains of IgG molecules. Interacts with ATP5F1A; the interaction occurs on the surface of T-cells and alters their cell morphology in concert with CONA. Binds IgG molecules containing kappa and lambda light chains and inhibits the formation of insoluble immunoglobulin complexes. Interacts with F12; the interaction, which is enhanced in the presence of zinc ions and inhibited by heparin-binding to HRG, inhibits factor XII autoactivation and contact-initiated coagulation. Interacts with PLG (via its Kringle domains); the interaction tethers PLG to the cell surface and enhances its activation. Interacts (via the HRR domain) with TPM1; the interaction appears to contribute to the antiangiogenic properties of the HRR domain. Interacts with THBS2; the interaction blocks the antiangiogenic effect of THBS2 with CD36. The cofactor is Zn(2+). Post-translationally, proteolytic cleavage produces several HRG fragments which are mostly disulfide-linked and, therefore, not released. Cleavage by plasmin is inhibited in the presence of heparin, zinc ions or in an acidic environment. Cleavage reduces binding of HRG to heparan sulfate, but enhances the ability of HRG to bind and tether plasminogen to the cell surface. On platelet activation, releases a 33 kDa antiangiogenic peptide which encompasses the HRR. Also cleaved in the C-terminal by plasmin. In terms of processing, N-glycosylated. As to expression, expressed in liver, blood plasma, serum and in platelets. Also present in fibrin clots, wound fluid from acute wounds and chronic leg ulcers.

It is found in the secreted. Plasma glycoprotein that binds a number of ligands such as heme, heparin, heparan sulfate, thrombospondin, plasminogen, and divalent metal ions. Binds heparin and heparin/glycosaminoglycans in a zinc-dependent manner. Binds heparan sulfate on the surface of liver, lung, kidney and heart endothelial cells. Binds to N-sulfated polysaccharide chains on the surface of liver endothelial cells. Inhibits rosette formation. Acts as an adapter protein and is implicated in regulating many processes such as immune complex and pathogen clearance, cell chemotaxis, cell adhesion, angiogenesis, coagulation and fibrinolysis. Mediates clearance of necrotic cells through enhancing the phagocytosis of necrotic cells in a heparan sulfate-dependent pathway. This process can be regulated by the presence of certain HRG ligands such as heparin and zinc ions. Binds to IgG subclasses of immunoglobins containing kappa and lambda light chains with different affinities regulating their clearance and inhibiting the formation of insoluble immune complexes. Tethers plasminogen to the cell surface. Binds T-cells and alters the cell morphology. Acts as a regulator of the vascular endothelial growth factor (VEGF) signaling pathway; inhibits endothelial cell motility by reducing VEGF-induced complex formation between PXN/paxillin and ILK/integrin-linked protein kinase and by promoting inhibition of VEGF-induced tyrosine phosphorylation of focal adhesion kinases and alpha-actinins in endothelial cells. Also plays a role in the regulation of tumor angiogenesis and tumor immune surveillance. Normalizes tumor vessels and promotes antitumor immunity by polarizing tumor-associated macrophages, leading to decreased tumor growth and metastasis. Modulates angiogenesis by blocking the CD6-mediated antiangiongenic effect of thrombospondins, THBS1 and THBS2. The chain is Histidine-rich glycoprotein (Hrg) from Mus musculus (Mouse).